Reading from the N-terminus, the 394-residue chain is Protein LAX PANICLE 2 (394 aa).

The disordered stretch occupies residues Met-1–Val-193. Over residues Ala-8 to Asp-20 the composition is skewed to basic residues. A compositionally biased stretch (basic and acidic residues) spans Gln-60–Pro-84. Low complexity-rich tracts occupy residues Thr-90–Leu-101, Gly-119–Asn-131, and Gly-146–Gly-155. The segment covering Ala-170 to Thr-185 has biased composition (pro residues).

As to quaternary structure, interacts with LAX1.

The protein localises to the nucleus. Involved in the regulation of shoot branching by controlling axillary meristem (AM) formation. Functions in association with LAX1 to regulate the process of AM formation. Possesses transactivation activity in yeast. The chain is Protein LAX PANICLE 2 from Oryza sativa subsp. japonica (Rice).